The following is a 422-amino-acid chain: Protein arginine methyltransferase NDUFAF7, mitochondrial (422 aa).

Residues 1-28 (MRTLLRLKRLMPEVLWTKRSCSSSSINK) constitute a mitochondrion transit peptide.

This sequence belongs to the NDUFAF7 family.

Its subcellular location is the mitochondrion. The catalysed reaction is L-arginyl-[protein] + 2 S-adenosyl-L-methionine = N(omega),N(omega)'-dimethyl-L-arginyl-[protein] + 2 S-adenosyl-L-homocysteine + 2 H(+). Arginine methyltransferase involved in the assembly or stability of mitochondrial NADH:ubiquinone oxidoreductase complex (complex I). Acts by mediating symmetric dimethylation of 'Arg-118' of ndufs2 after it assembles into the complex I, stabilizing the early intermediate complex. This Danio rerio (Zebrafish) protein is Protein arginine methyltransferase NDUFAF7, mitochondrial.